Consider the following 417-residue polypeptide: Probable serpin E3 (417 aa).

Positions 1–24 (MPQLSASSLFICLWLVDLCHVANS) are cleaved as a signal peptide. N-linked (GlcNAc...) asparagine glycosylation is found at Asn-50, Asn-106, Asn-140, Asn-147, and Asn-152.

This sequence belongs to the serpin family.

It localises to the secreted. Functionally, probable serine protease inhibitor. This is Probable serpin E3 (serpine3) from Danio rerio (Zebrafish).